The following is a 329-amino-acid chain: MTQLFYDTDADLSLLNKKTIAIIGYGSQGHAHALNLKDSGMDVIVGLYKGSKSEGKAVSDGLKVFSVSEACEKADWIMILLPDEFQKDVYLKEIEPNLKEGKILSFAHGFNIRFGLIKPPSFVDVVMIAPKGPGHTVRWEYQNGQGVPALFAVEQDSSGNARSLAMAYAKGIGGTRAGILETNFKEETETDLFGEQAVLCGGLSELVKSGFETLVEAGYQPELAYFECLHEVKLIVDLMVKGGLSQMRDSISNTAEYGDYVSGKRLINSDTKKEMQKILKDIQDGTFAKNFVEECDKNKPLMTKLREENSKHEIEKVGKGLRSMFSWLK.

The KARI N-terminal Rossmann domain occupies 2 to 182; sequence TQLFYDTDAD…GGTRAGILET (181 aa). NADP(+) contacts are provided by residues 25-28, Ser51, Ser53, and 83-86; these read YGSQ and DEFQ. The active site involves His108. Gly134 serves as a coordination point for NADP(+). The 146-residue stretch at 183–328 folds into the KARI C-terminal knotted domain; the sequence is NFKEETETDL…KGLRSMFSWL (146 aa). Asp191, Glu195, Glu227, and Glu231 together coordinate Mg(2+). Ser252 lines the substrate pocket.

The protein belongs to the ketol-acid reductoisomerase family. It depends on Mg(2+) as a cofactor.

It catalyses the reaction (2R)-2,3-dihydroxy-3-methylbutanoate + NADP(+) = (2S)-2-acetolactate + NADPH + H(+). The enzyme catalyses (2R,3R)-2,3-dihydroxy-3-methylpentanoate + NADP(+) = (S)-2-ethyl-2-hydroxy-3-oxobutanoate + NADPH + H(+). It functions in the pathway amino-acid biosynthesis; L-isoleucine biosynthesis; L-isoleucine from 2-oxobutanoate: step 2/4. The protein operates within amino-acid biosynthesis; L-valine biosynthesis; L-valine from pyruvate: step 2/4. In terms of biological role, involved in the biosynthesis of branched-chain amino acids (BCAA). Catalyzes an alkyl-migration followed by a ketol-acid reduction of (S)-2-acetolactate (S2AL) to yield (R)-2,3-dihydroxy-isovalerate. In the isomerase reaction, S2AL is rearranged via a Mg-dependent methyl migration to produce 3-hydroxy-3-methyl-2-ketobutyrate (HMKB). In the reductase reaction, this 2-ketoacid undergoes a metal-dependent reduction by NADPH to yield (R)-2,3-dihydroxy-isovalerate. This Prochlorococcus marinus (strain MIT 9312) protein is Ketol-acid reductoisomerase (NADP(+)).